The chain runs to 61 residues: Large ribosomal subunit protein eL37 (61 aa).

Positions 19, 22, 34, and 37 each coordinate Zn(2+). The segment at 19 to 37 (CRRCGRNAYNVSKHYCAAC) adopts a C4-type zinc-finger fold.

The protein belongs to the eukaryotic ribosomal protein eL37 family. Zn(2+) is required as a cofactor.

Its function is as follows. Binds to the 23S rRNA. This Saccharolobus islandicus (strain Y.N.15.51 / Yellowstone #2) (Sulfolobus islandicus) protein is Large ribosomal subunit protein eL37.